We begin with the raw amino-acid sequence, 223 residues long: uncharacterized protein (223 aa).

Its subcellular location is the plastid. It localises to the chloroplast. This is an uncharacterized protein from Mesostigma viride (Green alga).